Reading from the N-terminus, the 210-residue chain is Adenylate kinase isoenzyme 1 (210 aa).

Residue 30-35 (GSGKGT) coordinates ATP. Residues 50–79 (SSGDLLRDEVKSGSPRGAQLTAIMESGALV) form an NMP region. Residues Ser-51, Arg-56, 77–79 (ALV), 107–110 (GYPR), and Gln-114 each bind AMP. An LID region spans residues 144 to 154 (HRAQTSGRADD). Arg-145 contacts ATP. Arg-151 and Arg-162 together coordinate AMP. Gly-190 is an ATP binding site.

This sequence belongs to the adenylate kinase family. AK1 subfamily. As to quaternary structure, monomer.

It is found in the cytoplasm. It catalyses the reaction AMP + ATP = 2 ADP. Functionally, catalyzes the reversible transfer of the terminal phosphate group between ATP and AMP. Plays an important role in cellular energy homeostasis and in adenine nucleotide metabolism. The sequence is that of Adenylate kinase isoenzyme 1 from Caenorhabditis elegans.